The primary structure comprises 1064 residues: MKSRFSTVDLRAVLAELNASLLGMRVNNVYDVDNKTYLIRLQKPDFKATLLLESGIRIHTTEFEWPKNMMPSSFAMKCRKHLKSRRLVSAKQLGVDRIVDFQFGSDEAAYHLIIELYDRGNIVLTDYEYLILNILRFRTDEADDVKFAVRERYPIDHARAAEPLLTLERLTEVIAAAPKGEVLKRVLNPLLPYGPALIEHCLIESGFSGNAKVDEKLESKDIEKILVCVQRAEDYLRKTSNFNGKGYIIQKREAKPSLDADKPAEDILTYEEFHPFLFSQHLQCPYIEFESFDKAVDEFYSKIEGQKIDLKALQQEKQALKKLDNVRKDHENRLEALQQAQEIDKLKGELIEMNLQIVDRAIQVVRSALANQIDWTEIGVIVKEAQAQGDPVACAIKELKLQTNHVTMLLRNPYLLSEEEDGDGDASIENSDAEAPKGKKKKQKNKQLQKPQKNKPLLVDVDLSLSAYANAKKYYDHKRYAAKKTQRTVEAAEKAFKSAEKKTKQTLKEVQTVTSIQKARKVYWFEKFLWFISSENYLIIGGRDQQQNEIIVKRYLTPGDIYVHADLHGATSCVIKNPTGEPIPPRTLTEAGTMALCYSAAWDARVITSAWWVYHHQVSKTAPTGEYLTTGSFMIRGKKNFLPPSYLMMGFSFLFKVDESCVWRHRGERKVRVQDEDMETLTSCTSELMAEEMEQLEGGDSSEEETEELHGMPGDVELMTQVDQEDIAVHSGRDELSSEDGEAKAVTKDQEPIGEMKEEEEDTFEYPDTTIDLSHLQSQRPLQKLAPREESLNSNDSKSQGRRHLSAKERREMKKKKLPCESGDLEVIEEKDKERESAVHTEAYQNTSKNVAAGQPMKRGQKSKMKKMKEKYKDQDDEDRELIMKLLASAGSNKEEKGKKGKKGKPKDEPVKKPPQKPRGGQRVLDVVKEPPSLQVLAHDLQDLAVDDPHDDKEEHDLDQQGNEENLFDSLTGQPHPEDVLMFAIPICAPYTIMTNYKYKVKLTPGVQKKGKAAKTALNSFMHSKEATAREKDLFRSVKDTDLSRNIPGKVKVSAPNLLHVKRK.

Thr-7 bears the Phosphothreonine mark. Residues 296-359 are a coiled coil; the sequence is VDEFYSKIEG…LIEMNLQIVD (64 aa). Ser-417 is modified (phosphoserine). Residues 420–451 are disordered; sequence EDGDGDASIENSDAEAPKGKKKKQKNKQLQKP. Over residues 438 to 447 the composition is skewed to basic residues; sequence GKKKKQKNKQ. The stretch at 481–512 forms a coiled coil; the sequence is AAKKTQRTVEAAEKAFKSAEKKTKQTLKEVQT. Acidic residues predominate over residues 694 to 707; that stretch reads EQLEGGDSSEEETE. Disordered regions lie at residues 694-718 and 731-973; these read EQLE…DVEL and SGRD…SLTG. Positions 731–756 are enriched in basic and acidic residues; the sequence is SGRDELSSEDGEAKAVTKDQEPIGEM. The residue at position 737 (Ser-737) is a Phosphoserine. Residues 771 to 781 show a composition bias toward polar residues; it reads IDLSHLQSQRP. Basic and acidic residues predominate over residues 828-839; it reads IEEKDKERESAV. Residues 858 to 882 are a coiled coil; that stretch reads KRGQKSKMKKMKEKYKDQDDEDREL. Positions 859-870 are enriched in basic residues; that stretch reads RGQKSKMKKMKE. Residues 947–959 show a composition bias toward basic and acidic residues; the sequence is DDPHDDKEEHDLD. The span at 960 to 973 shows a compositional bias: polar residues; it reads QQGNEENLFDSLTG.

The protein belongs to the NEMF family. In terms of assembly, component of the ribosome quality control complex (RQC), composed of the E3 ubiquitin ligase LTN1, TCF25 and NEMF associated with the 60S ribosomal subunit. The complex probably also contains VCP/p97 and its ubiquitin-binding cofactors. Interacts (via its N-terminus) with XPO1.

The protein localises to the cytoplasm. It is found in the cytosol. Its subcellular location is the nucleus. Key component of the ribosome quality control complex (RQC), a ribosome-associated complex that mediates the extraction of incompletely synthesized nascent chains from stalled ribosomes as well as their ubiquitin-mediated proteasomal degradation. Thereby, frees 60S subunit ribosomes from the stalled translation complex and prevents the accumulation of nascent polypeptide chains that are potentially toxic for the cell. Within the RQC complex, NEMF specifically binds stalled 60S ribosomal subunits by recognizing an exposed, nascent chain-conjugated tRNA moiety and promotes the recruitment of LTN1 to stalled 60S subunits. Following binding to stalled 60S ribosomal subunits, NEMF mediates CAT tailing by recruiting alanine-charged tRNA to the A-site and directing the elongation of stalled nascent chains independently of mRNA or 40S subunits, leading to non-templated C-terminal alanine extensions (CAT tails). Mainly recruits alanine-charged tRNAs, but can also other amino acid-charged tRNAs. CAT tailing is required to promote ubiquitination of stalled nascent chains by different E3 ubiquitin-protein ligases. In the canonical RQC pathway (RQC-L), CAT tailing facilitates LTN1-dependent ubiquitination by exposing lysine residues that would otherwise remain buried in the ribosomal exit tunnel. In the alternative RQC pathway (RQC-C) CAT tailing creates an C-degron mainly composed of alanine that is recognized by the CRL2(KLHDC10) and RCHY1/PIRH2 E3 ligases, leading to ubiquitination and degradation of stalled nascent chains. NEMF may also indirectly play a role in nuclear export. This is Ribosome quality control complex subunit NEMF from Mus musculus (Mouse).